The sequence spans 528 residues: Biotin carboxylase 1, chloroplastic (528 aa).

A chloroplast-targeting transit peptide spans 1–51; that stretch reads MEATLPVCKSVTSTPGLFMGKTSGIRSSQCSFMMGNKVNFPRQRAQTAHVH. Residues Lys-179, Lys-221, 227–228, 263–266, and His-271 contribute to the ATP site; these read GG and EKYV. The 198-residue stretch at 183–380 folds into the ATP-grasp domain; sequence RETMKKAGVP…LIEEQIRVAM (198 aa). Lys-300 contacts hydrogencarbonate. Positions 338 and 351 each coordinate ATP. 3 residues coordinate Mg(2+): Glu-338, Glu-351, and Asn-353. Mn(2+) contacts are provided by Glu-338, Glu-351, and Asn-353. Hydrogencarbonate contacts are provided by Arg-355, Val-358, and Arg-401. Residue Arg-355 is part of the active site. Arg-401 serves as a coordination point for biotin.

In terms of assembly, acetyl-CoA carboxylase is a heterohexamer composed of biotin carboxyl carrier protein, biotin carboxylase and two subunits each of ACCase subunit alpha and ACCase plastid-coded subunit beta (accD). Mg(2+) serves as cofactor. The cofactor is Mn(2+).

Its subcellular location is the plastid. It localises to the chloroplast. The enzyme catalyses N(6)-biotinyl-L-lysyl-[protein] + hydrogencarbonate + ATP = N(6)-carboxybiotinyl-L-lysyl-[protein] + ADP + phosphate + H(+). It functions in the pathway lipid metabolism; malonyl-CoA biosynthesis; malonyl-CoA from acetyl-CoA: step 1/1. Functionally, this protein is a component of the acetyl coenzyme A carboxylase complex; first, biotin carboxylase catalyzes the carboxylation of the carrier protein and then the transcarboxylase transfers the carboxyl group to form malonyl-CoA. This Populus trichocarpa (Western balsam poplar) protein is Biotin carboxylase 1, chloroplastic.